We begin with the raw amino-acid sequence, 293 residues long: Probable tRNA-splicing endonuclease subunit Sen2 (293 aa).

Residues tyrosine 157, histidine 165, and lysine 204 contribute to the active site. Residues 267 to 287 (VVFNHWGVILGFTVLSGLLVY) form a helical membrane-spanning segment.

This sequence belongs to the tRNA-intron endonuclease family. TRNA splicing endonuclease is a heterotetramer composed of SEN2, SEN15, SEN34/LENG5 and SEN54.

The protein resides in the nucleus. It is found in the membrane. It catalyses the reaction pretRNA = a 3'-half-tRNA molecule with a 5'-OH end + a 5'-half-tRNA molecule with a 2',3'-cyclic phosphate end + an intron with a 2',3'-cyclic phosphate and a 5'-hydroxyl terminus.. In terms of biological role, constitutes one of the two catalytic subunit of the tRNA-splicing endonuclease complex, a complex responsible for identification and cleavage of the splice sites in pre-tRNA. It cleaves pre-tRNA at the 5'- and 3'-splice sites to release the intron. The products are an intron and two tRNA half-molecules bearing 2',3'-cyclic phosphate and 5'-OH termini. There are no conserved sequences at the splice sites, but the intron is invariably located at the same site in the gene, placing the splice sites an invariant distance from the constant structural features of the tRNA body. Probably carries the active site for 5'-splice site cleavage. In Oryza sativa subsp. japonica (Rice), this protein is Probable tRNA-splicing endonuclease subunit Sen2.